We begin with the raw amino-acid sequence, 611 residues long: Chaperone protein DnaK (611 aa).

Position 173 is a phosphothreonine; by autocatalysis (Thr173). Residues Ala579–Ala592 show a composition bias toward low complexity. Residues Ala579 to Asn598 form a disordered region.

Belongs to the heat shock protein 70 family.

Its function is as follows. Acts as a chaperone. The sequence is that of Chaperone protein DnaK from Bacillus cereus (strain AH187).